The primary structure comprises 366 residues: MRLIVAGGGTGGHLFPGIAVAEEFLARNSANEVLFIGTERGIEARLLPKLGYRLECISASGIKGQSPLTKVKSAALLLYGYSQSRKILKEFRPDVVLGVGGYASAPVVLSARGLQIRRFIHEQNAIPGLTNKVLARIADKVFISIEESRKFFPEDRTMLTGNPLRKEILWNVQQGKTEPKGGSLRLLVFGGSAGAHRINTAMVEALPHLAKVKEHLLITHQTGEKDHGEMKKAYGAAGFNAEVTPFIDNMAAAYAAADFIVCRAGATTLAEVAVSGKACIFIPYPYAADDHQRRNAEALLKEDAGFMILERELTGDTLAGQIIRLMQEPELVEKTAANIRKFGQLDAAQVIVDEMTGKQEPLCTEK.

Residues 10–12 (TGG), Asn-124, Arg-165, Ser-192, Ile-247, and Gln-292 contribute to the UDP-N-acetyl-alpha-D-glucosamine site.

It belongs to the glycosyltransferase 28 family. MurG subfamily.

Its subcellular location is the cell inner membrane. The enzyme catalyses di-trans,octa-cis-undecaprenyl diphospho-N-acetyl-alpha-D-muramoyl-L-alanyl-D-glutamyl-meso-2,6-diaminopimeloyl-D-alanyl-D-alanine + UDP-N-acetyl-alpha-D-glucosamine = di-trans,octa-cis-undecaprenyl diphospho-[N-acetyl-alpha-D-glucosaminyl-(1-&gt;4)]-N-acetyl-alpha-D-muramoyl-L-alanyl-D-glutamyl-meso-2,6-diaminopimeloyl-D-alanyl-D-alanine + UDP + H(+). The protein operates within cell wall biogenesis; peptidoglycan biosynthesis. In terms of biological role, cell wall formation. Catalyzes the transfer of a GlcNAc subunit on undecaprenyl-pyrophosphoryl-MurNAc-pentapeptide (lipid intermediate I) to form undecaprenyl-pyrophosphoryl-MurNAc-(pentapeptide)GlcNAc (lipid intermediate II). The chain is UDP-N-acetylglucosamine--N-acetylmuramyl-(pentapeptide) pyrophosphoryl-undecaprenol N-acetylglucosamine transferase from Geotalea daltonii (strain DSM 22248 / JCM 15807 / FRC-32) (Geobacter daltonii).